We begin with the raw amino-acid sequence, 5073 residues long: Malformin synthetase mlfA (5073 aa).

Residues 194 to 585 (ERHATNRPHS…CGRADTQVKL (392 aa)) are adenylation 1. The Carrier 1 domain occupies 726-799 (SRLEQEVQLA…EAASLAEVQE (74 aa)). Ser760 carries the O-(pantetheine 4'-phosphoryl)serine modification. Residues 837–1268 (EDVFPCTTMQ…ALNTLSLLQA (432 aa)) are condensation 1. The interval 1296–1685 (DRWVTRHPEG…GRKDTQVKLR (390 aa)) is adenylation 2. In terms of domain architecture, Carrier 2 spans 1823-1900 (TPASELERTL…QLAAEVGEPA (78 aa)). Residue Ser1860 is modified to O-(pantetheine 4'-phosphoryl)serine. Disordered regions lie at residues 1901–1930 (GQSASSASSTTEEGFTFSTPDDSSTNDGVD) and 1963–1984 (GGSSSNKTPSVSSSSSSSSSSK). Low complexity-rich tracts occupy residues 1903–1927 (SASSASSTTEEGFTFSTPDDSSTND) and 1965–1982 (SSSNKTPSVSSSSSSSSS). The interval 2031–2446 (EDIYPATALQ…AVSCSDTETL (416 aa)) is condensation 2. The interval 2469–2861 (SRTPHAPAVC…IGRRDGQLKL (393 aa)) is adenylation 3. A Carrier 3 domain is found at 2997-3073 (RPKTSQEQEM…QLICHLNSIR (77 aa)). At Ser3034 the chain carries O-(pantetheine 4'-phosphoryl)serine. Condensation regions lie at residues 3090 to 3555 (WVAL…TYDQ) and 3576 to 3995 (DIYP…EQLV). The segment at 4020 to 4410 (HASRQAVCAW…VGRKDNQIKF (391 aa)) is adenylation 4. The region spanning 4544 to 4620 (MPSTAAERKM…DLGDQARSPN (77 aa)) is the Carrier 4 domain. Position 4581 is an O-(pantetheine 4'-phosphoryl)serine (Ser4581). Positions 4611-4633 (DLGDQARSPNADNQRVSTASSAG) are disordered. Positions 4617–4631 (RSPNADNQRVSTASS) are enriched in polar residues. The tract at residues 4657–4991 (DVLPTTSFQR…LQTIVQHQNN (335 aa)) is condensation 5.

Belongs to the NRP synthetase family.

The protein operates within secondary metabolite biosynthesis. Nonribosomal peptide synthetase; part of the gene cluster that mediates the biosynthesis of malformins, cyclic pentapeptides with a disulfide bond between 2 consecutive cysteins, that show potential anti-tumor as well as antimalarial and antitrypanosomal properties. The nonribosomal peptide synthetase mlfA is responsible of the formation of the cyclic pentapeptide. The malformin biosynthesis clusters in malformin-producing fungi also contain enzymes involved in the formation of the disulfide bond between the two consecutive cysteins within malformins, in addition to additional tailoring enzymes such as methyltransferases or oxidoreductases. They are also composed of up to 4 major facilitator superfamily transporters, and transcription factors probably involved in the regulation of the expression of those clusters. The chain is Malformin synthetase mlfA from Aspergillus tubingensis (strain CBS 134.48).